A 160-amino-acid polypeptide reads, in one-letter code: Ribosomal RNA large subunit methyltransferase H (160 aa).

S-adenosyl-L-methionine-binding positions include Leu76, Gly108, and 127–132 (FGRMTF).

Belongs to the RNA methyltransferase RlmH family. In terms of assembly, homodimer.

The protein localises to the cytoplasm. It carries out the reaction pseudouridine(1915) in 23S rRNA + S-adenosyl-L-methionine = N(3)-methylpseudouridine(1915) in 23S rRNA + S-adenosyl-L-homocysteine + H(+). In terms of biological role, specifically methylates the pseudouridine at position 1915 (m3Psi1915) in 23S rRNA. The chain is Ribosomal RNA large subunit methyltransferase H from Methylocella silvestris (strain DSM 15510 / CIP 108128 / LMG 27833 / NCIMB 13906 / BL2).